The sequence spans 561 residues: Hemolysin transporter protein HpmB (561 aa).

The first 17 residues, 1 to 17, serve as a signal peptide directing secretion; it reads MKKKVVLLTLLSCFSTS. The POTRA domain occupies 77–150; sequence LPIKGVYIQG…GELGLYAIEG (74 aa).

It belongs to the TPS (TC 1.B.20) family.

It is found in the cell outer membrane. Its function is as follows. Interacts with the cell-bound hemolysin. Necessary for the extracellular secretion and activation of the hemolysin. Probable member of a two partner secretion pathway (TPS) in which it mediates the secretion of hemolysin. The polypeptide is Hemolysin transporter protein HpmB (hpmB) (Proteus mirabilis).